A 1006-amino-acid polypeptide reads, in one-letter code: Multiple C2 domain and transmembrane region protein 9 (1006 aa).

A C2 1 domain is found at 1–108; that stretch reads MSNIKLGVEV…PRSEAAPFNY (108 aa). The tract at residues 135–156 is disordered; that stretch reads VTPSVPTPVPESPQAYSPSPRK. C2 domains are found at residues 251 to 371, 411 to 536, and 579 to 704; these read RGTE…PQWY, SDSS…DRWV, and NSSD…THAY. Ca(2+)-binding residues include D284, D290, D337, D339, and D344. A run of 2 helical transmembrane segments spans residues 842 to 862 and 946 to 966; these read MLVTFPEMILPTVFLYMAVIG and ATAIFVTFCFIIAMALYITPF.

The protein belongs to the MCTP family. The cofactor is Ca(2+). In terms of tissue distribution, expressed in incipient leaf primordia and roots meristems. Observed in flowers.

The protein resides in the cell membrane. It localises to the cytoplasm. May function as a signaling molecule by regulating the trafficking of other regulators. The protein is Multiple C2 domain and transmembrane region protein 9 of Arabidopsis thaliana (Mouse-ear cress).